Here is a 241-residue protein sequence, read N- to C-terminus: Carboxy-S-adenosyl-L-methionine synthase (241 aa).

Residues Tyr-38, 63–65 (GCS), 88–89 (DN), 116–117 (DI), Asn-131, and Arg-198 contribute to the S-adenosyl-L-methionine site.

It belongs to the class I-like SAM-binding methyltransferase superfamily. Cx-SAM synthase family. As to quaternary structure, homodimer.

It catalyses the reaction prephenate + S-adenosyl-L-methionine = carboxy-S-adenosyl-L-methionine + 3-phenylpyruvate + H2O. Its function is as follows. Catalyzes the conversion of S-adenosyl-L-methionine (SAM) to carboxy-S-adenosyl-L-methionine (Cx-SAM). The polypeptide is Carboxy-S-adenosyl-L-methionine synthase (Actinobacillus pleuropneumoniae serotype 3 (strain JL03)).